Reading from the N-terminus, the 204-residue chain is MTVTLMQHTSLTICAHAIRTCWQSFEKSDGGGEKDRELIDRVGNKNKHASTLEHLVYTFYIQGISRACLQELARHRIASLSVKSSRYTLKELKAEEEFKEGDWERAKRYLVETESEAVNLASLKALENLRQVLLLGISNDMAKYCLPESYKTELTWTINARALQNFLTLRSSKSALWEIRKLAKTLHEALPKEHRYLFCLNQEG.

Positions 1-204 (MTVTLMQHTS…RYLFCLNQEG (204 aa)) constitute a ThyX domain. FAD is bound by residues Ser-50 and 74-76 (RHR). Residues 71–74 (ELAR), 84–86 (SSR), and Lys-143 contribute to the dUMP site. The ThyX motif signature appears at 74–84 (RHRIASLSVKS). FAD is bound by residues 159–161 (NAR) and Asn-165. Residue Arg-170 participates in dUMP binding. Residue Arg-170 is the Involved in ionization of N3 of dUMP, leading to its activation of the active site.

This sequence belongs to the thymidylate synthase ThyX family. As to quaternary structure, homotetramer. FAD is required as a cofactor.

The enzyme catalyses dUMP + (6R)-5,10-methylene-5,6,7,8-tetrahydrofolate + NADPH + H(+) = dTMP + (6S)-5,6,7,8-tetrahydrofolate + NADP(+). It functions in the pathway pyrimidine metabolism; dTTP biosynthesis. Its function is as follows. Catalyzes the reductive methylation of 2'-deoxyuridine-5'-monophosphate (dUMP) to 2'-deoxythymidine-5'-monophosphate (dTMP) while utilizing 5,10-methylenetetrahydrofolate (mTHF) as the methyl donor, and NADPH and FADH(2) as the reductant. This Wolinella succinogenes (strain ATCC 29543 / DSM 1740 / CCUG 13145 / JCM 31913 / LMG 7466 / NCTC 11488 / FDC 602W) (Vibrio succinogenes) protein is Flavin-dependent thymidylate synthase.